The chain runs to 317 residues: uncharacterized protein (317 aa).

Residues 11–31 (ALLLVIFGSLIVSFAIFFMVL) traverse the membrane as a helical segment. 3 consecutive PASTA domains span residues 33–100 (NNEI…FISK), 101–174 (GAII…LISK), and 180–241 (DKHV…TIAK).

The protein resides in the membrane. This is an uncharacterized protein from Borreliella burgdorferi (strain ATCC 35210 / DSM 4680 / CIP 102532 / B31) (Borrelia burgdorferi).